The primary structure comprises 1235 residues: ATP-dependent helicase/nuclease subunit A (1235 aa).

Residues 3–471 enclose the UvrD-like helicase ATP-binding domain; it reads TKWTETQKSA…IKLSENFRSR (469 aa). 24-31 serves as a coordination point for ATP; it reads AGAGTGKT. The UvrD-like helicase C-terminal domain maps to 509 to 808; it reads PFEGNCGGDV…RIMSIHKSKG (300 aa).

This sequence belongs to the helicase family. AddA subfamily. Heterodimer of AddA and AddB/RexB. The cofactor is Mg(2+).

The catalysed reaction is Couples ATP hydrolysis with the unwinding of duplex DNA by translocating in the 3'-5' direction.. It carries out the reaction ATP + H2O = ADP + phosphate + H(+). In terms of biological role, the heterodimer acts as both an ATP-dependent DNA helicase and an ATP-dependent, dual-direction single-stranded exonuclease. Recognizes the chi site generating a DNA molecule suitable for the initiation of homologous recombination. The AddA nuclease domain is required for chi fragment generation; this subunit has the helicase and 3' -&gt; 5' nuclease activities. This is ATP-dependent helicase/nuclease subunit A from Clostridium kluyveri (strain ATCC 8527 / DSM 555 / NBRC 12016 / NCIMB 10680 / K1).